The following is a 359-amino-acid chain: F-box/kelch-repeat protein At1g15670 (359 aa).

The region spanning 2 to 49 (ELIPDLPETVAYECLLRSSYKQFPLMASVCKLWQREISLSDFFRHRKA) is the F-box domain. 5 Kelch repeats span residues 119 to 167 (DLVV…ASDS), 170 to 217 (NVFV…FHAG), 219 to 269 (FHVI…CAAG), 271 to 310 (NGDL…AIRR), and 313 to 358 (NLVV…CFLE).

The protein is F-box/kelch-repeat protein At1g15670 of Arabidopsis thaliana (Mouse-ear cress).